Consider the following 405-residue polypeptide: Acetylornithine aminotransferase 2 (405 aa).

Pyridoxal 5'-phosphate is bound by residues 105-106 (GT) and phenylalanine 138. A N(2)-acetyl-L-ornithine-binding site is contributed by arginine 141. 224-227 (DEVQ) serves as a coordination point for pyridoxal 5'-phosphate. Lysine 254 is modified (N6-(pyridoxal phosphate)lysine). Serine 282 provides a ligand contact to N(2)-acetyl-L-ornithine. Threonine 283 lines the pyridoxal 5'-phosphate pocket.

This sequence belongs to the class-III pyridoxal-phosphate-dependent aminotransferase family. ArgD subfamily. As to quaternary structure, homodimer. It depends on pyridoxal 5'-phosphate as a cofactor.

The protein localises to the cytoplasm. The enzyme catalyses N(2)-acetyl-L-ornithine + 2-oxoglutarate = N-acetyl-L-glutamate 5-semialdehyde + L-glutamate. It functions in the pathway amino-acid biosynthesis; L-arginine biosynthesis; N(2)-acetyl-L-ornithine from L-glutamate: step 4/4. This is Acetylornithine aminotransferase 2 from Caulobacter vibrioides (strain ATCC 19089 / CIP 103742 / CB 15) (Caulobacter crescentus).